A 633-amino-acid polypeptide reads, in one-letter code: Putative serine/threonine-protein kinase L232 (633 aa).

The 305-residue stretch at 10-314 (YTIVDKLSEG…QSRKLFYEIL (305 aa)) folds into the Protein kinase domain. ATP is bound by residues 16-24 (LSEGTYGIV) and lysine 39. Catalysis depends on aspartate 133, which acts as the Proton acceptor.

This sequence belongs to the protein kinase superfamily. Ser/Thr protein kinase family.

The catalysed reaction is L-seryl-[protein] + ATP = O-phospho-L-seryl-[protein] + ADP + H(+). It carries out the reaction L-threonyl-[protein] + ATP = O-phospho-L-threonyl-[protein] + ADP + H(+). The sequence is that of Putative serine/threonine-protein kinase L232 from Acanthamoeba polyphaga mimivirus (APMV).